The following is a 120-amino-acid chain: MIAFHMVWSALLASLLLLLLAPSASPVDAFSPPEASLTGGQSLSKRSLFDPSCTGVFDRQLLRRLGRVCDDCFNVFREPNVAMECRSNCYNNPVFRQCMEYLLPAHLHDEYRLAVQMVGK.

The signal sequence occupies residues 1-27 (MIAFHMVWSALLASLLLLLLAPSASPV). 3 disulfide bridges follow: Cys-53–Cys-89, Cys-69–Cys-85, and Cys-72–Cys-98. Val-118 bears the Valine amide mark.

The protein belongs to the arthropod CHH/MIH/GIH/VIH hormone family.

The protein localises to the secreted. Functionally, hormone found in the sinus gland of isopods and decapods which controls the blood sugar level. Has a secretagogue action over the amylase released from the midgut gland. May act as a stress hormone and may be involved in the control of molting and reproduction. This is Crustacean hyperglycemic hormones 2 from Penaeus japonicus (Kuruma prawn).